Consider the following 391-residue polypeptide: 3-ketoacyl-CoA thiolase (391 aa).

Residue cysteine 95 is the Acyl-thioester intermediate of the active site. Residues histidine 347 and cysteine 377 each act as proton acceptor in the active site.

Belongs to the thiolase-like superfamily. Thiolase family. Heterotetramer of two alpha chains (FadB) and two beta chains (FadA).

The protein resides in the cytoplasm. It carries out the reaction an acyl-CoA + acetyl-CoA = a 3-oxoacyl-CoA + CoA. It functions in the pathway lipid metabolism; fatty acid beta-oxidation. In terms of biological role, catalyzes the final step of fatty acid oxidation in which acetyl-CoA is released and the CoA ester of a fatty acid two carbons shorter is formed. The protein is 3-ketoacyl-CoA thiolase of Vibrio parahaemolyticus serotype O3:K6 (strain RIMD 2210633).